A 410-amino-acid chain; its full sequence is Sorting nexin-4 (410 aa).

The region spanning 11 to 135 is the PX domain; it reads FIIVSDPQKQ…TFLVSSDWDA (125 aa). The a 1,2-diacyl-sn-glycero-3-phospho-(1D-myo-inositol-3-phosphate) site is built by arginine 58, serine 60, lysine 84, and arginine 101. Residues 329-368 are a coiled coil; it reads NQEAARREKISKLESKVQALTTEVENAKKVADAFEKEALK.

It belongs to the sorting nexin family.

Its subcellular location is the cytoplasm. It localises to the cytosol. The protein resides in the preautophagosomal structure membrane. The protein localises to the endosome membrane. Sorting nexin, involved in the separation or division of vacuoles throughout the entire life cycle of the cells. Involved in retrieval of late-Golgi SNAREs from post-Golgi endosomes to the trans-Golgi network, for cytoplasm to vacuole transport (Cvt), and autophagy of large cargos including mitophagy, pexophagy and glycophagy. This chain is Sorting nexin-4 (SNX4), found in Eremothecium gossypii (strain ATCC 10895 / CBS 109.51 / FGSC 9923 / NRRL Y-1056) (Yeast).